The following is a 340-amino-acid chain: GTPase Obg (340 aa).

One can recognise an Obg domain in the interval 1 to 159 (MRFIDKAKIH…RWIELELKLI (159 aa)). Positions 160–331 (ADIGIIGFPN…LIKLIAEVYE (172 aa)) constitute an OBG-type G domain. GTP is bound by residues 166-173 (GFPNAGKS), 191-195 (FTTLT), 213-216 (DIPG), 283-286 (NKID), and 312-314 (SLV). Residues S173 and T193 each coordinate Mg(2+).

Belongs to the TRAFAC class OBG-HflX-like GTPase superfamily. OBG GTPase family. As to quaternary structure, monomer. Mg(2+) is required as a cofactor.

It is found in the cytoplasm. In terms of biological role, an essential GTPase which binds GTP, GDP and possibly (p)ppGpp with moderate affinity, with high nucleotide exchange rates and a fairly low GTP hydrolysis rate. Plays a role in control of the cell cycle, stress response, ribosome biogenesis and in those bacteria that undergo differentiation, in morphogenesis control. The protein is GTPase Obg of Persephonella marina (strain DSM 14350 / EX-H1).